Here is a 215-residue protein sequence, read N- to C-terminus: Probable phosphoglycerate mutase GpmB (215 aa).

Residues 8 to 15 (RHGETQWN), 21 to 22 (QG), arginine 58, 82 to 85 (ELDM), 104 to 105 (RR), and 151 to 152 (GM) contribute to the substrate site. Histidine 9 functions as the Tele-phosphohistidine intermediate in the catalytic mechanism. Glutamate 82 functions as the Proton donor/acceptor in the catalytic mechanism.

Belongs to the phosphoglycerate mutase family. GpmB subfamily.

The catalysed reaction is (2R)-2-phosphoglycerate = (2R)-3-phosphoglycerate. Its pathway is carbohydrate degradation; glycolysis; pyruvate from D-glyceraldehyde 3-phosphate: step 3/5. In Cronobacter sakazakii (strain ATCC BAA-894) (Enterobacter sakazakii), this protein is Probable phosphoglycerate mutase GpmB.